We begin with the raw amino-acid sequence, 601 residues long: ATP-dependent lipid A-core flippase (601 aa).

In terms of domain architecture, ABC transmembrane type-1 spans 28 to 328; it reads LLSVVGLIVY…LTRVNAEFQR (301 aa). The next 6 membrane-spanning stretches (helical) occupy residues 32–52, 81–101, 160–180, 183–203, 267–287, and 296–316; these read VGLI…GPFI, VLLM…FANF, ALIS…LMFY, WKLS…ITIV, AVSQ…VLYA, and DLTA…LQPI. The ABC transporter domain occupies 360–597; that stretch reads LRFDNVSFSY…GGMYAKLYQM (238 aa). Residue 394 to 401 coordinates ATP; that stretch reads GRSGSGKS.

Belongs to the ABC transporter superfamily. Lipid exporter (TC 3.A.1.106) family. As to quaternary structure, homodimer.

The protein localises to the cell inner membrane. The catalysed reaction is ATP + H2O + lipid A-core oligosaccharideSide 1 = ADP + phosphate + lipid A-core oligosaccharideSide 2.. Its function is as follows. Involved in lipopolysaccharide (LPS) biosynthesis. Translocates lipid A-core from the inner to the outer leaflet of the inner membrane. Transmembrane domains (TMD) form a pore in the inner membrane and the ATP-binding domain (NBD) is responsible for energy generation. The chain is ATP-dependent lipid A-core flippase from Shewanella oneidensis (strain ATCC 700550 / JCM 31522 / CIP 106686 / LMG 19005 / NCIMB 14063 / MR-1).